A 1377-amino-acid chain; its full sequence is DNA-directed RNA polymerase subunit beta' (1377 aa).

Cys-60, Cys-62, Cys-75, and Cys-78 together coordinate Zn(2+). Mg(2+)-binding residues include Asp-449, Asp-451, and Asp-453. Positions 777, 851, 858, and 861 each coordinate Zn(2+).

It belongs to the RNA polymerase beta' chain family. In terms of assembly, the RNAP catalytic core consists of 2 alpha, 1 beta, 1 beta' and 1 omega subunit. When a sigma factor is associated with the core the holoenzyme is formed, which can initiate transcription. Requires Mg(2+) as cofactor. Zn(2+) serves as cofactor.

It carries out the reaction RNA(n) + a ribonucleoside 5'-triphosphate = RNA(n+1) + diphosphate. In terms of biological role, DNA-dependent RNA polymerase catalyzes the transcription of DNA into RNA using the four ribonucleoside triphosphates as substrates. The chain is DNA-directed RNA polymerase subunit beta' from Borreliella burgdorferi (strain ZS7) (Borrelia burgdorferi).